A 213-amino-acid chain; its full sequence is Carboxysome shell protein CcmP (213 aa).

BMC circularly permuted domains follow at residues E4–P106 and K107–S211. The Probably important for pore gating motif lies at E69–R70.

It belongs to the EutL/PduB family. As to quaternary structure, a dimer of stacked trimers, the same faces interact.

It localises to the carboxysome. Its function is as follows. Probably part of the carboxysome shell, a polyhedral inclusion where RuBisCO (ribulose bisphosphate carboxylase, rbcL-rbcS) is sequestered. It is thought that this protein controls transport of RuBisCO reactants in and out of the carboxysome; residual densities in the 4 X-ray structures suggest that differing compounds bind in interior pockets, depending on the open or closed state of the pore. The chain is Carboxysome shell protein CcmP from Synechococcus elongatus (strain ATCC 33912 / PCC 7942 / FACHB-805) (Anacystis nidulans R2).